Reading from the N-terminus, the 406-residue chain is Zinc finger protein CONSTANS-LIKE 6 (406 aa).

Positions 17, 20, 40, and 45 each coordinate Zn(2+). A B box-type; atypical zinc finger spans residues 17 to 59 (CDSCVKRRARWYCAADDAFLCHACDGSVHSANPLARRHERVRL). Positions 63–95 (SAGKYRHASPPHQATWHQGFTRKARTPRGGKKS) are disordered. The span at 82 to 95 (FTRKARTPRGGKKS) shows a compositional bias: basic residues. A CCT domain is found at 357-399 (REARVSRYREKRRTRLFSKKIRYEVRKLNAEKRPRMKGRFVKR).

It belongs to the CONSTANS family.

It is found in the nucleus. The polypeptide is Zinc finger protein CONSTANS-LIKE 6 (COL6) (Arabidopsis thaliana (Mouse-ear cress)).